Here is a 561-residue protein sequence, read N- to C-terminus: uncharacterized protein (561 aa).

Disordered stretches follow at residues 20 to 42 (IQEQATSDTKPESSPDINLGCSP) and 82 to 283 (QIGS…STPF). Residues 103–131 (DKISEDTDQERVVVCESLENKSSSKDKSP) are compositionally biased toward basic and acidic residues. Composition is skewed to basic residues over residues 135–156 (RSPKRHKSSKKHKSSKKHKSSK) and 165–185 (KSSKRHKSHKKKDKSHKKRYR). Basic and acidic residues-rich tracts occupy residues 192 to 203 (SLSRDRSSSRDR), 211 to 247 (YSRDRSLSRDRSLSRDRSLSRDRSPPRDRSLSRDRSP), and 259 to 272 (PLRDRSPTRDRSVS).

The protein belongs to the mimivirus L41 family.

This is an uncharacterized protein from Acanthamoeba polyphaga (Amoeba).